Consider the following 518-residue polypeptide: Crotonobetaine/carnitine--CoA ligase (518 aa).

This sequence belongs to the ATP-dependent AMP-binding enzyme family.

It carries out the reaction 4-(trimethylamino)butanoate + ATP + CoA = 4-(trimethylamino)butanoyl-CoA + AMP + diphosphate. It catalyses the reaction crotonobetaine + ATP + CoA = crotonobetainyl-CoA + AMP + diphosphate. The catalysed reaction is (R)-carnitine + ATP + CoA = (R)-carnitinyl-CoA + AMP + diphosphate. Its pathway is amine and polyamine metabolism; carnitine metabolism. In terms of biological role, catalyzes the transfer of CoA to carnitine, generating the initial carnitinyl-CoA needed for the CaiB reaction cycle. Also has activity toward crotonobetaine and gamma-butyrobetaine. The sequence is that of Crotonobetaine/carnitine--CoA ligase from Proteus sp. (strain LE138).